The primary structure comprises 1036 residues: ADAMTS-like protein 4 (1036 aa).

Residues 1–24 (MESWLGRLWLCMMLLLPLPQPCQD) form the signal peptide. The TSP type-1 1 domain maps to 47 to 91 (GPWGRWASCSQPCGVGVQRRSRTCELHPALPLPPRPPRHPEAHRP). 2 disordered regions span residues 73-149 (HPAL…IKPG) and 163-308 (HRSR…WLPL). Residues 163–173 (HRSRRHPHRPG) are compositionally biased toward basic residues. Residues 215–253 (TPRSGTAQTEVLPRTSSAPSYTGTPAPTSSFGDSRSFQG) show a composition bias toward polar residues. Asn-454 and Asn-737 each carry an N-linked (GlcNAc...) asparagine glycan. 5 consecutive TSP type-1 domains span residues 687–748 (CPPY…HLCG), 750–804 (WEIS…DMGP), 805–871 (CTTA…GPCE), 872–931 (RTWR…QGQA), and 932–988 (CEDK…QPCN). In terms of domain architecture, PLAC spans 991 to 1028 (PDDQCKDSSPHCPLVVQARLCVYPYYTTTCCRSCAHVL).

As to quaternary structure, interacts with CTSB. Interacts with FBN1. In terms of processing, glycosylated. Can be O-fucosylated by POFUT2 on a serine or a threonine residue found within the consensus sequence C1-X(2)-(S/T)-C2-G of the TSP type-1 repeat domains where C1 and C2 are the first and second cysteine residue of the repeat, respectively. Fucosylated repeats can then be further glycosylated by the addition of a beta-1,3-glucose residue by the glucosyltransferase, B3GALTL. Fucosylation mediates the efficient secretion of ADAMTS family members. Can also be C-glycosylated with one or two mannose molecules on tryptophan residues within the consensus sequence W-X-X-W of the TPRs, and N-glycosylated. These other glycosylations can also facilitate secretion. Widely expressed in a range of tissues. Especially prevalent in brain, spinal cord, muscle, lung and heart.

It is found in the secreted. Its subcellular location is the extracellular space. It localises to the extracellular matrix. Positive regulation of apoptosis. May facilitate FBN1 microfibril biogenesis. The sequence is that of ADAMTS-like protein 4 from Mus musculus (Mouse).